A 267-amino-acid polypeptide reads, in one-letter code: MNWGEQVASRRQRVHEQRPLVHHITNLVVTNLTANVTLAIGASPVMAYAREEVADMARLAQAVVLNMGTLTGDVVEAMLLAGKAANNAGIPVVFDPVGAGATPFRTRTAQKIIKELHIDILRGNASEIASIGGFGGHTKGVDAAGAPARVAEMVKQVARDLNTVVAVTGATDYISDGERLIAVDNGHPLLTFVTGTGCSATSIIAAFRAVEEDGVTASTAALAYYGLAAERAAAVSQGPASFQVALLDTLYNLAGEELARGVKIRLL.

Residue Met-46 coordinates substrate. ATP-binding residues include Arg-122 and Thr-168. Gly-195 contacts substrate.

The protein belongs to the Thz kinase family. The cofactor is Mg(2+).

The enzyme catalyses 5-(2-hydroxyethyl)-4-methylthiazole + ATP = 4-methyl-5-(2-phosphooxyethyl)-thiazole + ADP + H(+). It participates in cofactor biosynthesis; thiamine diphosphate biosynthesis; 4-methyl-5-(2-phosphoethyl)-thiazole from 5-(2-hydroxyethyl)-4-methylthiazole: step 1/1. Catalyzes the phosphorylation of the hydroxyl group of 4-methyl-5-beta-hydroxyethylthiazole (THZ). This chain is Hydroxyethylthiazole kinase, found in Moorella thermoacetica (strain ATCC 39073 / JCM 9320).